We begin with the raw amino-acid sequence, 314 residues long: Trihelix transcription factor ASR3 (314 aa).

The interval 1 to 34 (MALEQLGLGVSAVDGGENSSAPSNDGGDDGVKTA) is disordered. One can recognise a Myb-like domain in the interval 38–104 (RWTRQEILVL…QCRKRWSNLA (67 aa)). The Nuclear localization signal signature appears at 84–91 (CKRHGVNR). The EAR 1 signature appears at 161–165 (LSLGL). A Phosphothreonine; by MAPK4 modification is found at threonine 189. A disordered region spans residues 207–255 (CVADQGRVKEKQPEAANVEGGSTSQEERKRKRTSFGEKEEEEEEGETKK). An EAR 2 motif is present at residues 280-284 (LNLKL).

In terms of assembly, homodimer. Interacts directly with MPK4. Phosphorylated on Thr-189 by MPK4 in response to microbe-associated molecular patterns (MAMPs, e.g. flg22, elf18, chitin, and LPS). This phosphorylation enhances DNA-binding and thus negatively regulates immune gene expression.

The protein localises to the nucleus. Functionally, transcriptional repressor that binds DNA and plays a negative role in regulating microbe-associated molecular patterns-(MAMPs, e.g. flg22, elf18, chitin, and LPS) triggered immunity (PTI) by negatively regulating immune gene expression. The polypeptide is Trihelix transcription factor ASR3 (Arabidopsis thaliana (Mouse-ear cress)).